The primary structure comprises 165 residues: Phosphopantetheine adenylyltransferase (165 aa).

T10 contacts substrate. ATP contacts are provided by residues T10–F11 and H18. Substrate is bound by residues K42, L75, and R89. Residues G90–R92, E100, and V125–S131 each bind ATP.

Belongs to the bacterial CoaD family. Homohexamer. Mg(2+) is required as a cofactor.

It is found in the cytoplasm. It catalyses the reaction (R)-4'-phosphopantetheine + ATP + H(+) = 3'-dephospho-CoA + diphosphate. The protein operates within cofactor biosynthesis; coenzyme A biosynthesis; CoA from (R)-pantothenate: step 4/5. Functionally, reversibly transfers an adenylyl group from ATP to 4'-phosphopantetheine, yielding dephospho-CoA (dPCoA) and pyrophosphate. This chain is Phosphopantetheine adenylyltransferase, found in Buchnera aphidicola subsp. Acyrthosiphon pisum (strain 5A).